The chain runs to 737 residues: MEGEAVEAIVEESETFIKGKERKTYQRRREGGQEEDACHLPQNQTDGGEVVQDVNSSVQMVMMEQLDPTLLQMKTEVMEGTVAPEAEAAVDDTQIITLQVVNMEEQPINIGELQLVQVPVPVTVPVATTSVEELQGAYENEVSKEGLAESEPMICHTLPLPEGFQVVKVGANGEVETLEQGELPPQEDPSWQKDPDYQPPAKKTKKTKKSKLRYTEEGKDVDVSVYDFEEEQQEGLLSEVNAEKVVGNMKPPKPTKIKKKGVKKTFQCELCSYTCPRRSNLDRHMKSHTDERPHKCHLCGRAFRTVTLLRNHLNTHTGTRPHKCPDCDMAFVTSGELVRHRRYKHTHEKPFKCSMCDYASVEVSKLKRHIRSHTGERPFQCSLCSYASRDTYKLKRHMRTHSGEKPYECYICHARFTQSGTMKMHILQKHTENVAKFHCPHCDTVIARKSDLGVHLRKQHSYIEQGKKCRYCDAVFHERYALIQHQKSHKNEKRFKCDQCDYACRQERHMIMHKRTHTGEKPYACSHCDKTFRQKQLLDMHFKRYHDPNFVPAAFVCSKCGKTFTRRNTMARHADNCAGPDGVEGENGGETKKSKRGRKRKMRSKKEDSSDSENAEPDLDDNEEEEEPAVEIEPEPEPQPQPQPQPQPQPVAPAPPPAKKRRGRPPGRTNQPKQNQPTAIIQVEDQNTGAIENIIVEVKKEPDAEPAEGEEEEAQAAPADAPNGDLTPEMILSMMDR.

M1 is modified (N-acetylmethionine). K18 is covalently cross-linked (Glycyl lysine isopeptide (Lys-Gly) (interchain with G-Cter in SUMO2)). Residue K74 forms a Glycyl lysine isopeptide (Lys-Gly) (interchain with G-Cter in SUMO) linkage. The interval 180-211 (QGELPPQEDPSWQKDPDYQPPAKKTKKTKKSK) is disordered. Positions 202–211 (KKTKKTKKSK) are enriched in basic residues. K219 participates in a covalent cross-link: Glycyl lysine isopeptide (Lys-Gly) (interchain with G-Cter in SUMO2). Residues 266–288 (FQCELCSYTCPRRSNLDRHMKSH) form a C2H2-type 1 zinc finger. Position 289 is a phosphothreonine (T289). The C2H2-type 2 zinc finger occupies 294–316 (HKCHLCGRAFRTVTLLRNHLNTH). T317 carries the post-translational modification Phosphothreonine. C2H2-type zinc fingers lie at residues 322–345 (HKCP…RYKH) and 351–373 (FKCS…IRSH). T374 is modified (phosphothreonine). The C2H2-type 5 zinc finger occupies 379-401 (FQCSLCSYASRDTYKLKRHMRTH). At S402 the chain carries Phosphoserine. C2H2-type zinc fingers lie at residues 407–430 (YECY…LQKH), 437–460 (FHCP…RKQH), 467–489 (KKCR…QKSH), 495–517 (FKCD…KRTH), and 523–546 (YACS…KRYH). The C2H2-type 11; atypical zinc finger occupies 555-577 (FVCSKCGKTFTRRNTMARHADNC). Disordered regions lie at residues 573-687 (HADN…EDQN) and 699-727 (KKEP…GDLT). Positions 593–604 (KSKRGRKRKMRS) are enriched in basic residues. S609, S610, and S612 each carry phosphoserine. Positions 610–636 (SDSENAEPDLDDNEEEEEPAVEIEPEP) are enriched in acidic residues. Positions 637–657 (EPQPQPQPQPQPQPVAPAPPP) are enriched in pro residues. Positions 668–687 (RTNQPKQNQPTAIIQVEDQN) are enriched in polar residues. K699 is covalently cross-linked (Glycyl lysine isopeptide (Lys-Gly) (interchain with G-Cter in SUMO); alternate). A Glycyl lysine isopeptide (Lys-Gly) (interchain with G-Cter in SUMO2); alternate cross-link involves residue K699. Over residues 704 to 714 (AEPAEGEEEEA) the composition is skewed to acidic residues.

This sequence belongs to the CTCF zinc-finger protein family. Interacts with CHD8. Interacts with LLPH. Interacts with CENPE. Interacts with BRD2; promoting BRD2 recruitment to chromatin. In terms of processing, sumoylated on Lys-74 and Lys-699; sumoylation of CTCF contributes to the repressive function of CTCF on the MYC P2 promoter.

Its subcellular location is the nucleus. The protein resides in the nucleoplasm. The protein localises to the chromosome. It is found in the centromere. In terms of biological role, chromatin binding factor that binds to DNA sequence specific sites and regulates the 3D structure of chromatin. Binds together strands of DNA, thus forming chromatin loops, and anchors DNA to cellular structures, such as the nuclear lamina. Defines the boundaries between active and heterochromatic DNA via binding to chromatin insulators, thereby preventing interaction between promoter and nearby enhancers and silencers. Plays a critical role in the epigenetic regulation. Participates in the allele-specific gene expression at the imprinted IGF2/H19 gene locus. On the maternal allele, binding within the H19 imprinting control region (ICR) mediates maternally inherited higher-order chromatin conformation to restrict enhancer access to IGF2. Mediates interchromosomal association between IGF2/H19 and WSB1/NF1 and may direct distant DNA segments to a common transcription factory. Regulates asynchronous replication of IGF2/H19. Plays a critical role in gene silencing over considerable distances in the genome. Preferentially interacts with unmethylated DNA, preventing spreading of CpG methylation and maintaining methylation-free zones. Inversely, binding to target sites is prevented by CpG methylation. Plays an important role in chromatin remodeling. Can dimerize when it is bound to different DNA sequences, mediating long-range chromatin looping. Causes local loss of histone acetylation and gain of histone methylation in the beta-globin locus, without affecting transcription. When bound to chromatin, it provides an anchor point for nucleosomes positioning. Seems to be essential for homologous X-chromosome pairing. May participate with Tsix in establishing a regulatable epigenetic switch for X chromosome inactivation. May play a role in preventing the propagation of stable methylation at the escape genes from X-inactivation. Involved in sister chromatid cohesion. Associates with both centromeres and chromosomal arms during metaphase and required for cohesin localization to CTCF sites. Plays a role in the recruitment of CENPE to the pericentromeric/centromeric regions of the chromosome during mitosis. Acts as a transcriptional repressor binding to promoters of vertebrate MYC gene and BAG1 gene. Also binds to the PLK and PIM1 promoters. Acts as a transcriptional activator of APP. Regulates APOA1/C3/A4/A5 gene cluster and controls MHC class II gene expression. Plays an essential role in oocyte and preimplantation embryo development by activating or repressing transcription. Seems to act as tumor suppressor. This is Transcriptional repressor CTCF (Ctcf) from Rattus norvegicus (Rat).